The sequence spans 481 residues: Cobyric acid synthase (481 aa).

The region spanning 244–431 (VLRVVIPVLP…LHGLFDAPEA (188 aa)) is the GATase cobBQ-type domain. The Nucleophile role is filled by cysteine 325. Histidine 423 is an active-site residue.

Belongs to the CobB/CobQ family. CobQ subfamily.

It participates in cofactor biosynthesis; adenosylcobalamin biosynthesis. In terms of biological role, catalyzes amidations at positions B, D, E, and G on adenosylcobyrinic A,C-diamide. NH(2) groups are provided by glutamine, and one molecule of ATP is hydrogenolyzed for each amidation. This is Cobyric acid synthase from Ralstonia nicotianae (strain ATCC BAA-1114 / GMI1000) (Ralstonia solanacearum).